The chain runs to 878 residues: MEIRKKPNIFTVLVIDFSSKPSMALLLAILLFLSGPSASAVAAAAVGPATGFKPADDILIDCGSKSSSKTPDGRVFKSDQETIQYIEAKEDIQVSAPPSDKVASPIYLTARIFREEATYKFHLTRPGWHWVRLHFLAFPNDKFDLQQATFSVLTEKYVLLHNFKISNNNNDSQAAVQKEYLVNMTDAQFALRFRPMKSSAAFINAIEVVSAPDELISDSGTALFPVIGFSGLSDYAYQSVYRVNVGGPLIMPQNDTLGRTWIPDKEFLKDENLAKDVKTTPSAIKYPPEVTPLIAPQTVYATAVEMANSLTIDPNFNVSWNFPSNPSFNYLIRLHFCDIVSKSLNDLYFNVYINGKTAISGLDLSTVAGNLAAPYYKDIVVNATLMGPELQVQIGPMGEDTGTKNAILNGVEVLKMSNSVNSLDGEFGVDGRTTGMGKHGMVATAGFVMMFGAFIGLGAMVYKWKKRPQDWQKRNSFSSWLLPIHAGDSTFMTSKGGSQKSNFYNSTLGLGRYFSLSELQEATKNFEASQIIGVGGFGNVYIGTLDDGTKVAVKRGNPQSEQGITEFQTEIQMLSKLRHRHLVSLIGYCDENSEMILVYEFMSNGPFRDHLYGKNLAPLTWKQRLEICIGSARGLHYLHTGTAQGIIHRDVKSTNILLDEALVAKVADFGLSKDVAFGQNHVSTAVKGSFGYLDPEYFRRQQLTDKSDVYSFGVVLLEALCARPAINPQLPREQVNLAEWAMQWKRKGLLEKIIDPHLAGTINPESMKKFAEAAEKCLEDYGVDRPTMGDVLWNLEYALQLQEAFTQGKAEETENAKPDVVTPGSVPVSDPSPITPSVTTNEAATVPVPAKVEENSGTAVDEHSGTAMFTQFANLNGR.

Positions 1–43 (MEIRKKPNIFTVLVIDFSSKPSMALLLAILLFLSGPSASAVAA) are cleaved as a signal peptide. The Extracellular segment spans residues 44–440 (AAVGPATGFK…GRTTGMGKHG (397 aa)). Residues Asn170, Asn183, Asn254, Asn317, and Asn382 are each glycosylated (N-linked (GlcNAc...) asparagine). A helical transmembrane segment spans residues 441–461 (MVATAGFVMMFGAFIGLGAMV). Over 462-878 (YKWKKRPQDW…FTQFANLNGR (417 aa)) the chain is Cytoplasmic. The Protein kinase domain maps to 526–798 (FEASQIIGVG…GDVLWNLEYA (273 aa)). ATP is bound by residues 532 to 540 (IGVGGFGNV) and Lys554. Asp650 acts as the Proton acceptor in catalysis. The tract at residues 808-844 (GKAEETENAKPDVVTPGSVPVSDPSPITPSVTTNEAA) is disordered.

Belongs to the protein kinase superfamily. Ser/Thr protein kinase family.

The protein localises to the membrane. This Arabidopsis thaliana (Mouse-ear cress) protein is Probable receptor-like protein kinase At4g39110.